A 168-amino-acid chain; its full sequence is Photosystem I assembly protein Ycf3 (168 aa).

TPR repeat units follow at residues 35–68 (AFTYYRDGMSAQSEGNYAEALQNYYEAMRPEIDP), 72–105 (SYILYNIGLIHTSNGEHTKALEYYFRALERNPFL), and 120–153 (GEEAIRQGDSEIAEAWFDQAAEYWKQAIALTPGN).

It belongs to the Ycf3 family.

The protein localises to the plastid. It localises to the chloroplast thylakoid membrane. Essential for the assembly of the photosystem I (PSI) complex. May act as a chaperone-like factor to guide the assembly of the PSI subunits. The chain is Photosystem I assembly protein Ycf3 from Nuphar advena (Common spatterdock).